Reading from the N-terminus, the 64-residue chain is Large ribosomal subunit protein bL35 (64 aa).

Basic residues predominate over residues 1 to 22; that stretch reads MPKMKSHTGMGKRVRVTGKGKI. Residues 1-39 form a disordered region; the sequence is MPKMKSHTGMGKRVRVTGKGKIVKQQAGLRHNLEKKPST.

It belongs to the bacterial ribosomal protein bL35 family.

This is Large ribosomal subunit protein bL35 from Salinispora arenicola (strain CNS-205).